Reading from the N-terminus, the 120-residue chain is UPF0231 protein YacL (120 aa).

Belongs to the UPF0231 family.

The polypeptide is UPF0231 protein YacL (Salmonella agona (strain SL483)).